The chain runs to 300 residues: Bifunctional protein FolD (300 aa).

NADP(+)-binding positions include 168–170 (GRS), serine 193, and isoleucine 234.

It belongs to the tetrahydrofolate dehydrogenase/cyclohydrolase family. Homodimer.

It catalyses the reaction (6R)-5,10-methylene-5,6,7,8-tetrahydrofolate + NADP(+) = (6R)-5,10-methenyltetrahydrofolate + NADPH. The enzyme catalyses (6R)-5,10-methenyltetrahydrofolate + H2O = (6R)-10-formyltetrahydrofolate + H(+). The protein operates within one-carbon metabolism; tetrahydrofolate interconversion. Functionally, catalyzes the oxidation of 5,10-methylenetetrahydrofolate to 5,10-methenyltetrahydrofolate and then the hydrolysis of 5,10-methenyltetrahydrofolate to 10-formyltetrahydrofolate. The sequence is that of Bifunctional protein FolD from Ehrlichia ruminantium (strain Gardel).